The primary structure comprises 951 residues: Zinc fingers and homeoboxes protein 3 (951 aa).

Residues methionine 1 to asparagine 66 are disordered. Positions methionine 1–proline 107 are required for nuclear localization. Residues proline 42–serine 58 show a composition bias toward low complexity. C2H2-type zinc fingers lie at residues tyrosine 77–histidine 100 and phenylalanine 109–histidine 132. Positions threonine 227–proline 252 are disordered. Positions alanine 238–serine 483 are required for homodimerization and interaction with NFYA. The tract at residues leucine 299 to serine 497 is required for repressor activity. DNA-binding regions (homeobox) lie at residues serine 300–tryptophan 359 and alanine 489–lysine 548. The tract at residues tyrosine 492 to serine 550 is required for nuclear localization. Serine 599 bears the Phosphoserine mark. The homeobox 3 DNA-binding region spans threonine 607–glutamate 666. Positions valine 662–lysine 676 are enriched in basic and acidic residues. A disordered region spans residues valine 662–glutamate 690. The segment covering glutamate 677–glutamate 690 has biased composition (acidic residues). Phosphoserine occurs at positions 703 and 718. 2 DNA-binding regions (homeobox) span residues proline 759–glutamine 818 and phenylalanine 830–valine 889. Positions serine 916–aspartate 951 are disordered. Over residues serine 919–proline 936 the composition is skewed to low complexity. A phosphoserine mark is found at serine 922 and serine 941. Polar residues predominate over residues phenylalanine 937–aspartate 951.

The protein belongs to the ZHX family. Homodimer (via homeobox domain 1). Heterodimer with ZHX1 (via homeobox domain 1). Heterodimer with ZHX2 (via homeobox domain 1). Heterodimerization with ZHX1 is a prerequisite for repressor activity. Interacts with NFYA. In terms of tissue distribution, ubiquitously expressed.

It localises to the nucleus. In terms of biological role, acts as a transcriptional repressor. Involved in the early stages of mesenchymal stem cell (MSC) osteogenic differentiation. Is a regulator of podocyte gene expression during primary glomerula disease. Binds to promoter DNA. This Mus musculus (Mouse) protein is Zinc fingers and homeoboxes protein 3 (Zhx3).